The primary structure comprises 129 residues: D-ribose pyranase (129 aa).

The Proton donor role is filled by His20. Substrate is bound by residues Asp28, His96, and 118 to 120 (YAN).

Belongs to the RbsD / FucU family. RbsD subfamily. Homodecamer.

It localises to the cytoplasm. The enzyme catalyses beta-D-ribopyranose = beta-D-ribofuranose. Its pathway is carbohydrate metabolism; D-ribose degradation; D-ribose 5-phosphate from beta-D-ribopyranose: step 1/2. Functionally, catalyzes the interconversion of beta-pyran and beta-furan forms of D-ribose. This Streptomyces coelicolor (strain ATCC BAA-471 / A3(2) / M145) protein is D-ribose pyranase.